The primary structure comprises 361 residues: MTHERGYDLASQVLNICNVHHKKLFCHITYRHLLVLSSDDNGCVILKKVITIADDFLKDEFLDLIAQHAHSLSMHDLGISLIQHVLELDFTKKTTQDDKRLHELMAEFDEVLSTSVTADVDKLHKLASKLMLDSDLFFEFVITRRGSLMIQIILGKSEEVDQVILAGVKQRFIDVTTNFYGYRIMIQTIKVFKKRGDLKVYDQILRLIGVHALYLTKDPDMGNKTFQHAINLHHQDCTTFIACGLQSHYIELSFLKHGSKIVEMLIDDRISMVPLVLLMMEIVKCDEDTLVRLATDEYGNNILKKFLALAKEHKEDFFGDLVDKLNPLLDSLRGTLGENIVAIIDSETEMVKDRIVSQGNN.

Residues 5 to 348 enclose the PUM-HD domain; the sequence is RGYDLASQVL…NIVAIIDSET (344 aa). Pumilio repeat units follow at residues 27-63 and 64-103; these read HITYRHLLVLSSDDNGCVILKKVITIADDFLKDEFLD and LIAQHAHSLSMHDLGISLIQHVLELDFTKKTTQDDKRLHE. Residues 104 to 131 form a Pumilio 3; degenerate repeat; sequence LMAEFDEVLSTSVTADVDKLHKLASKLM. A Pumilio 4 repeat occupies 132-167; sequence LDSDLFFEFVITRRGSLMIQIILGKSEEVDQVILAG. A Pumilio 5; degenerate repeat occupies 168-205; sequence VKQRFIDVTTNFYGYRIMIQTIKVFKKRGDLKVYDQIL. The stretch at 206–243 is one Pumilio 6; degenerate repeat; that stretch reads RLIGVHALYLTKDPDMGNKTFQHAINLHHQDCTTFIAC. Pumilio repeat units lie at residues 244–284 and 285–319; these read GLQS…EIVK and CDEDTLVRLATDEYGNNILKKFLALAKEHKEDFFG.

It localises to the cytoplasm. Functionally, sequence-specific RNA-binding protein that regulates translation and mRNA stability by binding the 3'-UTR of target mRNAs. The polypeptide is Putative pumilio homolog 22 (APUM22) (Arabidopsis thaliana (Mouse-ear cress)).